A 443-amino-acid polypeptide reads, in one-letter code: ATP-dependent protease ATPase subunit HslU (443 aa).

Residues I18, 60–65 (GVGKTE), D256, E321, and R393 each bind ATP.

The protein belongs to the ClpX chaperone family. HslU subfamily. In terms of assembly, a double ring-shaped homohexamer of HslV is capped on each side by a ring-shaped HslU homohexamer. The assembly of the HslU/HslV complex is dependent on binding of ATP.

The protein localises to the cytoplasm. Functionally, ATPase subunit of a proteasome-like degradation complex; this subunit has chaperone activity. The binding of ATP and its subsequent hydrolysis by HslU are essential for unfolding of protein substrates subsequently hydrolyzed by HslV. HslU recognizes the N-terminal part of its protein substrates and unfolds these before they are guided to HslV for hydrolysis. This chain is ATP-dependent protease ATPase subunit HslU, found in Salmonella arizonae (strain ATCC BAA-731 / CDC346-86 / RSK2980).